The chain runs to 754 residues: Cytosolic neutral trehalase (754 aa).

Residues 1–10 (MDGKVNNNPP) show a composition bias toward polar residues. Disordered regions lie at residues 1 to 47 (MDGK…LSKN) and 54 to 73 (TFSV…YTSP). Positions 117, 119, 121, 123, and 128 each coordinate Ca(2+). Substrate-binding positions include Arg-305, 312–313 (WD), Asn-349, 358–360 (RSQ), Glu-427, Arg-476, and Gly-479. Residues Asp-481 and Glu-676 each act as proton donor/acceptor in the active site.

This sequence belongs to the glycosyl hydrolase 37 family. Ca(2+) is required as a cofactor.

The protein resides in the cytoplasm. The catalysed reaction is alpha,alpha-trehalose + H2O = alpha-D-glucose + beta-D-glucose. It participates in carbohydrate degradation. Hydrolyzes intracellular trehalose to glucose. The disaccharide trehalose serves as a storage molecule for energy and carbohydrates that is mobilized during nutrient stress. The sequence is that of Cytosolic neutral trehalase from Kluyveromyces lactis (strain ATCC 8585 / CBS 2359 / DSM 70799 / NBRC 1267 / NRRL Y-1140 / WM37) (Yeast).